A 210-amino-acid chain; its full sequence is Probable glutathione S-transferase gst-36 (210 aa).

The 78-residue stretch at 2 to 79 folds into the GST N-terminal domain; sequence PHFKFYYFDV…YLGHQFHRAG (78 aa). Glutathione-binding positions include Tyr-8, Trp-39, Lys-43, 49–51, and 63–64; these read GQV and QT. The GST C-terminal domain maps to 81–210; that stretch reads NAVDCARLDM…YVSQRKATPA (130 aa).

Belongs to the GST superfamily. Sigma family.

The enzyme catalyses RX + glutathione = an S-substituted glutathione + a halide anion + H(+). In terms of biological role, conjugation of reduced glutathione to a wide number of exogenous and endogenous hydrophobic electrophiles. This chain is Probable glutathione S-transferase gst-36 (gst-36), found in Caenorhabditis elegans.